Here is a 128-residue protein sequence, read N- to C-terminus: Large ribosomal subunit protein uL22 (128 aa).

Residues 1–22 form a disordered region; sequence MARGHRSQIKRERNANKDTRPS. Residues 9 to 21 are compositionally biased toward basic and acidic residues; sequence IKRERNANKDTRP.

Belongs to the universal ribosomal protein uL22 family. In terms of assembly, part of the 50S ribosomal subunit.

Functionally, this protein binds specifically to 23S rRNA; its binding is stimulated by other ribosomal proteins, e.g. L4, L17, and L20. It is important during the early stages of 50S assembly. It makes multiple contacts with different domains of the 23S rRNA in the assembled 50S subunit and ribosome. Its function is as follows. The globular domain of the protein is located near the polypeptide exit tunnel on the outside of the subunit, while an extended beta-hairpin is found that lines the wall of the exit tunnel in the center of the 70S ribosome. The polypeptide is Large ribosomal subunit protein uL22 (Lachnoclostridium phytofermentans (strain ATCC 700394 / DSM 18823 / ISDg) (Clostridium phytofermentans)).